The primary structure comprises 143 residues: Putative pre-16S rRNA nuclease (143 aa).

The protein belongs to the YqgF nuclease family.

It localises to the cytoplasm. Could be a nuclease involved in processing of the 5'-end of pre-16S rRNA. This is Putative pre-16S rRNA nuclease from Crocosphaera subtropica (strain ATCC 51142 / BH68) (Cyanothece sp. (strain ATCC 51142)).